A 95-amino-acid polypeptide reads, in one-letter code: Putative small ubiquitin-related modifier 7 (95 aa).

Positions 13–90 constitute a Ubiquitin-like domain; it reads SHITIKIKSQ…IDAFVDQIAG (78 aa). Gly90 is covalently cross-linked (Glycyl lysine isopeptide (Gly-Lys) (interchain with K-? in acceptor proteins)).

Belongs to the ubiquitin family. SUMO subfamily. In terms of assembly, interacts with SAE2, SCE1, SIZ1 and MMS21 Covalently attached to a number of proteins.

It is found in the nucleus. It localises to the cytoplasm. Ubiquitin-like protein which can be covalently attached to target lysines as a monomer. Does not seem to be involved in protein degradation and may function as an antagonist of ubiquitin in the degradation process. This Arabidopsis thaliana (Mouse-ear cress) protein is Putative small ubiquitin-related modifier 7 (SUMO7).